The following is a 514-amino-acid chain: Putative fucosyltransferase 10 (514 aa).

N-linked (GlcNAc...) asparagine glycosylation is found at N185, N210, N355, N377, and N456.

It belongs to the glycosyltransferase 37 family. As to expression, expressed in root, leaves, stems and seedlings.

The protein localises to the golgi apparatus. Its pathway is protein modification; protein glycosylation. In terms of biological role, may be involved in cell wall biosynthesis. May act as a fucosyltransferase. In Arabidopsis thaliana (Mouse-ear cress), this protein is Putative fucosyltransferase 10 (FUT10).